A 303-amino-acid polypeptide reads, in one-letter code: Taste receptor type 2 member 13 (303 aa).

The Extracellular portion of the chain corresponds to 1-7; the sequence is MESALPS. A helical transmembrane segment spans residues 8-28; it reads IFTLVIIAEFIIGNLSNGFIV. Topologically, residues 29–55 are cytoplasmic; that stretch reads LINCIDWVSKRELSSVDKLLIILAISR. Residues 56–76 form a helical membrane-spanning segment; that stretch reads IGLIWEILVSWFLALHYLAIF. The Extracellular portion of the chain corresponds to 77-85; that stretch reads VSGTGLRIM. Residues 86–106 form a helical membrane-spanning segment; sequence IFSWIVSNHFNLWLATIFSIF. Residues 107–128 lie on the Cytoplasmic side of the membrane; that stretch reads YLLKIASFSSPAFLYLKWRVNK. The chain crosses the membrane as a helical span at residues 129 to 149; sequence VILMILLGTLVFLFLNLIQIN. Over 150–184 the chain is Extracellular; that stretch reads MHIKDWLDRYERNTTWNFSMSDFETFSVSVKFTMT. Asn162 and Asn166 each carry an N-linked (GlcNAc...) asparagine glycan. The helical transmembrane segment at 185-205 threads the bilayer; sequence MFSLTPFTVAFISFLLLIFSL. Topologically, residues 206–232 are cytoplasmic; it reads QKHLQKMQLNYKGHRDPRTKVHTNALK. Residues 233–253 traverse the membrane as a helical segment; it reads IVISFLLFYASFFLCVLISWI. Over 254–261 the chain is Extracellular; it reads SELYQNTV. A helical membrane pass occupies residues 262–282; the sequence is IYMLCETIGVFSPSSHSFLLI. At 283–303 the chain is on the cytoplasmic side; it reads LGNAKLRQAFLLVAAKVWAKR.

It belongs to the G-protein coupled receptor T2R family. As to expression, expressed in subsets of taste receptor cells of the tongue and palate epithelium and exclusively in gustducin-positive cells.

The protein resides in the membrane. Receptor that may play a role in the perception of bitterness and is gustducin-linked. May play a role in sensing the chemical composition of the gastrointestinal content. The activity of this receptor may stimulate alpha gustducin, mediate PLC-beta-2 activation and lead to the gating of TRPM5. The sequence is that of Taste receptor type 2 member 13 (TAS2R13) from Homo sapiens (Human).